The following is a 287-amino-acid chain: MIYSMTAFARLEVKKDWGDAVWEIRSVNQRYLENFFRLPEQFRGLENTLREKLRQNLTRGKIECSLRIETKKQANAELNLNKELANQVIQSLQWIKAQAGEGEINLTDVLRYPGVVEAQEQDLDAISQDLLTAFDDLLTDFIAMRGREGEKLNDIIQQRLDSIAVETDKVRSQMPAVLQWQRERLLQRFEDAQLNLDPQRVEQEMILLAQRIDVAEELDRLQMHVKETTNILKKGGAVGRKLDFMMQELNRESNTLASKSINADITASAVELKVLIEQMREQIQNLE.

It belongs to the YicC/YloC family. Requires a divalent metal cation as cofactor.

Functionally, probably a ssRNA endonuclease. Its function is as follows. Might contribute to small RNA (sRNA) regulation. This Haemophilus influenzae (strain ATCC 51907 / DSM 11121 / KW20 / Rd) protein is Probable endoribonuclease YicC.